A 109-amino-acid chain; its full sequence is Thiosulfate sulfurtransferase GlpE (109 aa).

In terms of domain architecture, Rhodanese spans 16 to 104 (REQGAVVVDI…WRSTYPAETA (89 aa)). Cys64 serves as the catalytic Cysteine persulfide intermediate.

It belongs to the GlpE family.

The protein resides in the cytoplasm. The catalysed reaction is thiosulfate + hydrogen cyanide = thiocyanate + sulfite + 2 H(+). It carries out the reaction thiosulfate + [thioredoxin]-dithiol = [thioredoxin]-disulfide + hydrogen sulfide + sulfite + 2 H(+). In terms of biological role, transferase that catalyzes the transfer of sulfur from thiosulfate to thiophilic acceptors such as cyanide or dithiols. May function in a CysM-independent thiosulfate assimilation pathway by catalyzing the conversion of thiosulfate to sulfite, which can then be used for L-cysteine biosynthesis. This chain is Thiosulfate sulfurtransferase GlpE, found in Pseudomonas fluorescens (strain ATCC BAA-477 / NRRL B-23932 / Pf-5).